The primary structure comprises 121 residues: MFNKCSFHSSIYRPAADNSASSLCAIICFLNLVIECDLETNSEINKLIIYLFSQNNRIRFSKLLLKILFYISIFSYPELMCEQYVTFIKPGIHYGQVSKKHIIYSTFLSKNFKFQLLRVCW.

Specifically expressed in chronic lymphocytic leukemia (CLL) cells from patients without immunoglobulin heavy-chain hypermutations. Expression is detected in all CLL cells and levels are similar in patients before and after treatment.

Its subcellular location is the cytoplasm. The chain is Chronic lymphocytic leukemia up-regulated protein 1 (CLLU1) from Homo sapiens (Human).